The primary structure comprises 175 residues: Bifunctional protein PyrR (175 aa).

Substrate is bound by residues 40 to 41, Arg85, 102 to 110, Arg135, and Val159; these read TR and DDVLYTGRT. The PRPP-binding motif lies at 98–110; the sequence is VVIIDDVLYTGRT.

This sequence belongs to the purine/pyrimidine phosphoribosyltransferase family. PyrR subfamily. As to quaternary structure, homodimer and homohexamer; in equilibrium.

The catalysed reaction is UMP + diphosphate = 5-phospho-alpha-D-ribose 1-diphosphate + uracil. Functionally, regulates transcriptional attenuation of the pyrimidine nucleotide (pyr) operon by binding in a uridine-dependent manner to specific sites on pyr mRNA. This disrupts an antiterminator hairpin in the RNA and favors formation of a downstream transcription terminator, leading to a reduced expression of downstream genes. Also displays a weak uracil phosphoribosyltransferase activity which is not physiologically significant. The sequence is that of Bifunctional protein PyrR from Staphylococcus epidermidis (strain ATCC 35984 / DSM 28319 / BCRC 17069 / CCUG 31568 / BM 3577 / RP62A).